The chain runs to 375 residues: Deoxyribonuclease-2 (375 aa).

The N-terminal stretch at 1-21 is a signal peptide; it reads MGLSPAAVLIFLLLGVSQTYA. Asn-131 carries an N-linked (GlcNAc...) asparagine glycan.

It belongs to the DNase II family.

The catalysed reaction is Endonucleolytic cleavage to nucleoside 3'-phosphates and 3'-phosphooligonucleotide end-products.. In terms of biological role, hydrolyzes DNA under acidic conditions with a preference for double-stranded DNA. Implicated in apoptosis. The sequence is that of Deoxyribonuclease-2 (nuc-1) from Caenorhabditis elegans.